A 147-amino-acid polypeptide reads, in one-letter code: Nucleoside diphosphate kinase (147 aa).

6 residues coordinate ATP: Lys-9, Phe-57, Arg-85, Thr-91, Arg-102, and Asn-112. The active-site Pros-phosphohistidine intermediate is the His-115.

The protein belongs to the NDK family. As to quaternary structure, homotetramer. Requires Mg(2+) as cofactor.

It is found in the cytoplasm. It carries out the reaction a 2'-deoxyribonucleoside 5'-diphosphate + ATP = a 2'-deoxyribonucleoside 5'-triphosphate + ADP. The enzyme catalyses a ribonucleoside 5'-diphosphate + ATP = a ribonucleoside 5'-triphosphate + ADP. Functionally, major role in the synthesis of nucleoside triphosphates other than ATP. The ATP gamma phosphate is transferred to the NDP beta phosphate via a ping-pong mechanism, using a phosphorylated active-site intermediate. The protein is Nucleoside diphosphate kinase of Thermosipho melanesiensis (strain DSM 12029 / CIP 104789 / BI429).